The following is a 95-amino-acid chain: Large ribosomal subunit protein uL23 (95 aa).

The protein belongs to the universal ribosomal protein uL23 family. As to quaternary structure, contacts protein L29, and trigger factor when it is bound to the ribosome. Part of the 50S ribosomal subunit.

Functionally, one of the early assembly proteins it binds 23S rRNA. One of the proteins that surrounds the polypeptide exit tunnel on the outside of the ribosome. Forms the main docking site for trigger factor binding to the ribosome. The sequence is that of Large ribosomal subunit protein uL23 from Geobacillus stearothermophilus (Bacillus stearothermophilus).